A 317-amino-acid polypeptide reads, in one-letter code: UV DNA damage endonuclease (317 aa).

Belongs to the uve1/UvsE family.

In terms of biological role, component in a DNA repair pathway. Removal of UV LIGHT damaged nucleotides. Recognizes pyrimidine dimers and cleave a phosphodiester bond immediately 5' to the lesion. The protein is UV DNA damage endonuclease of Bacillus cereus (strain 03BB102).